The chain runs to 408 residues: Transmembrane protein 237 (408 aa).

Basic and acidic residues predominate over residues 1 to 14 (MRTDSGARLEEGHL). The interval 1-137 (MRTDSGARLE…RRKTKKTQPA (137 aa)) is disordered. Serine 25 and serine 49 each carry phosphoserine. The segment covering 60–77 (RPSEGNEPSTKELKEHPE) has biased composition (basic and acidic residues). Low complexity predominate over residues 95 to 106 (TSSTQKKSSSSS). Helical transmembrane passes span 227–247 (MIGL…IVVI), 268–288 (LAYP…ISAF), 303–323 (FLAL…LILS), and 358–378 (WIVV…FLSY).

Belongs to the TMEM237 family. In terms of assembly, part of the tectonic-like complex (also named B9 complex). Interacts with TMEM107.

The protein resides in the membrane. The protein localises to the cell projection. It is found in the cilium. Component of the transition zone in primary cilia. Required for ciliogenesis. This Homo sapiens (Human) protein is Transmembrane protein 237 (TMEM237).